Consider the following 217-residue polypeptide: 3-demethoxyubiquinol 3-hydroxylase (217 aa).

6 residues coordinate Fe cation: glutamate 66, glutamate 96, histidine 99, glutamate 148, glutamate 180, and histidine 183.

This sequence belongs to the COQ7 family. Requires Fe cation as cofactor.

The protein localises to the cell membrane. It carries out the reaction a 5-methoxy-2-methyl-3-(all-trans-polyprenyl)benzene-1,4-diol + AH2 + O2 = a 3-demethylubiquinol + A + H2O. The protein operates within cofactor biosynthesis; ubiquinone biosynthesis. Functionally, catalyzes the hydroxylation of 2-nonaprenyl-3-methyl-6-methoxy-1,4-benzoquinol during ubiquinone biosynthesis. This chain is 3-demethoxyubiquinol 3-hydroxylase, found in Xylella fastidiosa (strain Temecula1 / ATCC 700964).